Here is a 212-residue protein sequence, read N- to C-terminus: Dephospho-CoA kinase (212 aa).

Positions 3 to 204 constitute a DPCK domain; it reads ILGLTGSIGM…GSRPAAPVGG (202 aa). 11 to 16 provides a ligand contact to ATP; it reads GMGKST.

The protein belongs to the CoaE family.

The protein localises to the cytoplasm. It carries out the reaction 3'-dephospho-CoA + ATP = ADP + CoA + H(+). It functions in the pathway cofactor biosynthesis; coenzyme A biosynthesis; CoA from (R)-pantothenate: step 5/5. Catalyzes the phosphorylation of the 3'-hydroxyl group of dephosphocoenzyme A to form coenzyme A. This Paramagnetospirillum magneticum (strain ATCC 700264 / AMB-1) (Magnetospirillum magneticum) protein is Dephospho-CoA kinase.